Reading from the N-terminus, the 1578-residue chain is Pentafunctional AROM polypeptide (1578 aa).

The 3-dehydroquinate synthase stretch occupies residues 1–384 (MAEPTKIKIL…YEPKASVVPN (384 aa)). NAD(+) is bound by residues 44-46 (DTN), 81-84 (EVSK), 114-116 (GGV), and Asp-119. Arg-130 contacts 7-phospho-2-dehydro-3-deoxy-D-arabino-heptonate. Position 139–140 (139–140 (TT)) interacts with NAD(+). 2 residues coordinate 7-phospho-2-dehydro-3-deoxy-D-arabino-heptonate: Asp-146 and Lys-152. An NAD(+)-binding site is contributed by Lys-161. Position 162 (Asn-162) interacts with 7-phospho-2-dehydro-3-deoxy-D-arabino-heptonate. NAD(+)-binding positions include 179–182 (FLET) and Asn-190. A Zn(2+)-binding site is contributed by Glu-194. Residues 194–197 (EVIK) and Lys-250 each bind 7-phospho-2-dehydro-3-deoxy-D-arabino-heptonate. Catalysis depends on Glu-260, which acts as the Proton acceptor; for 3-dehydroquinate synthase activity. 7-phospho-2-dehydro-3-deoxy-D-arabino-heptonate is bound by residues 264-268 (RNLLN) and His-271. His-271 lines the Zn(2+) pocket. Residue His-275 is the Proton acceptor; for 3-dehydroquinate synthase activity of the active site. Positions 287 and 356 each coordinate 7-phospho-2-dehydro-3-deoxy-D-arabino-heptonate. His-287 contributes to the Zn(2+) binding site. The tract at residues 397 to 842 (VHPGVEPASN…WDTLRQKFSA (446 aa)) is EPSP synthase. The active-site For EPSP synthase activity is the Cys-824. The interval 864–1055 (TASVFIIGMR…KRKKHSFFVS (192 aa)) is shikimate kinase. ATP is bound at residue 871–878 (GMRGAGKT). Residues 1056–1276 (LTLPDLRTAG…AAPGQLSATE (221 aa)) are 3-dehydroquinase. The active-site Proton acceptor; for 3-dehydroquinate dehydratase activity is the His-1179. Lys-1207 (schiff-base intermediate with substrate; for 3-dehydroquinate dehydratase activity) is an active-site residue. The interval 1289–1578 (QKKFAVFGTP…EDARAAVLSS (290 aa)) is shikimate dehydrogenase.

The protein in the N-terminal section; belongs to the sugar phosphate cyclases superfamily. Dehydroquinate synthase family. It in the 2nd section; belongs to the EPSP synthase family. This sequence in the 3rd section; belongs to the shikimate kinase family. In the 4th section; belongs to the type-I 3-dehydroquinase family. The protein in the C-terminal section; belongs to the shikimate dehydrogenase family. In terms of assembly, homodimer. It depends on Zn(2+) as a cofactor.

Its subcellular location is the cytoplasm. It catalyses the reaction 7-phospho-2-dehydro-3-deoxy-D-arabino-heptonate = 3-dehydroquinate + phosphate. The enzyme catalyses 3-dehydroquinate = 3-dehydroshikimate + H2O. The catalysed reaction is shikimate + NADP(+) = 3-dehydroshikimate + NADPH + H(+). It carries out the reaction shikimate + ATP = 3-phosphoshikimate + ADP + H(+). It catalyses the reaction 3-phosphoshikimate + phosphoenolpyruvate = 5-O-(1-carboxyvinyl)-3-phosphoshikimate + phosphate. The protein operates within metabolic intermediate biosynthesis; chorismate biosynthesis; chorismate from D-erythrose 4-phosphate and phosphoenolpyruvate: step 2/7. Its pathway is metabolic intermediate biosynthesis; chorismate biosynthesis; chorismate from D-erythrose 4-phosphate and phosphoenolpyruvate: step 3/7. It participates in metabolic intermediate biosynthesis; chorismate biosynthesis; chorismate from D-erythrose 4-phosphate and phosphoenolpyruvate: step 4/7. It functions in the pathway metabolic intermediate biosynthesis; chorismate biosynthesis; chorismate from D-erythrose 4-phosphate and phosphoenolpyruvate: step 5/7. The protein operates within metabolic intermediate biosynthesis; chorismate biosynthesis; chorismate from D-erythrose 4-phosphate and phosphoenolpyruvate: step 6/7. Functionally, the AROM polypeptide catalyzes 5 consecutive enzymatic reactions in prechorismate polyaromatic amino acid biosynthesis. The polypeptide is Pentafunctional AROM polypeptide (Aspergillus flavus (strain ATCC 200026 / FGSC A1120 / IAM 13836 / NRRL 3357 / JCM 12722 / SRRC 167)).